The chain runs to 228 residues: DNA mismatch repair protein MutH (228 aa).

The protein belongs to the MutH family.

It is found in the cytoplasm. Its function is as follows. Sequence-specific endonuclease that cleaves unmethylated GATC sequences. It is involved in DNA mismatch repair. This chain is DNA mismatch repair protein MutH, found in Yersinia pseudotuberculosis serotype O:1b (strain IP 31758).